Here is a 206-residue protein sequence, read N- to C-terminus: ATP-dependent Clp protease proteolytic subunit 1 (206 aa).

S100 (nucleophile) is an active-site residue. The active site involves H125.

Belongs to the peptidase S14 family. Fourteen ClpP subunits assemble into 2 heptameric rings which stack back to back to give a disk-like structure with a central cavity, resembling the structure of eukaryotic proteasomes.

It is found in the cytoplasm. The enzyme catalyses Hydrolysis of proteins to small peptides in the presence of ATP and magnesium. alpha-casein is the usual test substrate. In the absence of ATP, only oligopeptides shorter than five residues are hydrolyzed (such as succinyl-Leu-Tyr-|-NHMec, and Leu-Tyr-Leu-|-Tyr-Trp, in which cleavage of the -Tyr-|-Leu- and -Tyr-|-Trp bonds also occurs).. Functionally, cleaves peptides in various proteins in a process that requires ATP hydrolysis. Has a chymotrypsin-like activity. Plays a major role in the degradation of misfolded proteins. This chain is ATP-dependent Clp protease proteolytic subunit 1, found in Myxococcus xanthus (strain DK1622).